Reading from the N-terminus, the 198-residue chain is Probable nicotinate-nucleotide adenylyltransferase (198 aa).

This sequence belongs to the NadD family.

It carries out the reaction nicotinate beta-D-ribonucleotide + ATP + H(+) = deamido-NAD(+) + diphosphate. It functions in the pathway cofactor biosynthesis; NAD(+) biosynthesis; deamido-NAD(+) from nicotinate D-ribonucleotide: step 1/1. Functionally, catalyzes the reversible adenylation of nicotinate mononucleotide (NaMN) to nicotinic acid adenine dinucleotide (NaAD). This chain is Probable nicotinate-nucleotide adenylyltransferase, found in Albidiferax ferrireducens (strain ATCC BAA-621 / DSM 15236 / T118) (Rhodoferax ferrireducens).